A 677-amino-acid chain; its full sequence is Methionine--tRNA ligase (677 aa).

The short motif at 15-25 (PYANGSIHLGH) is the 'HIGH' region element. Zn(2+) is bound by residues C146, C149, C159, and C162. The short motif at 333-337 (KMSKS) is the 'KMSKS' region element. K336 provides a ligand contact to ATP. Positions 575 to 677 (DFAKVDLRVA…DGAKPGQQVK (103 aa)) constitute a tRNA-binding domain.

It belongs to the class-I aminoacyl-tRNA synthetase family. MetG type 1 subfamily. Homodimer. The cofactor is Zn(2+).

The protein localises to the cytoplasm. It catalyses the reaction tRNA(Met) + L-methionine + ATP = L-methionyl-tRNA(Met) + AMP + diphosphate. Is required not only for elongation of protein synthesis but also for the initiation of all mRNA translation through initiator tRNA(fMet) aminoacylation. The polypeptide is Methionine--tRNA ligase (Salmonella arizonae (strain ATCC BAA-731 / CDC346-86 / RSK2980)).